We begin with the raw amino-acid sequence, 342 residues long: tRNA N6-adenosine threonylcarbamoyltransferase (342 aa).

Fe cation contacts are provided by His111 and His115. Residues Leu134–Gly138, Asp167, Gly180, and Asn276 contribute to the substrate site. Asp304 is a Fe cation binding site.

Belongs to the KAE1 / TsaD family. Fe(2+) is required as a cofactor.

It localises to the cytoplasm. The catalysed reaction is L-threonylcarbamoyladenylate + adenosine(37) in tRNA = N(6)-L-threonylcarbamoyladenosine(37) in tRNA + AMP + H(+). Its function is as follows. Required for the formation of a threonylcarbamoyl group on adenosine at position 37 (t(6)A37) in tRNAs that read codons beginning with adenine. Is involved in the transfer of the threonylcarbamoyl moiety of threonylcarbamoyl-AMP (TC-AMP) to the N6 group of A37, together with TsaE and TsaB. TsaD likely plays a direct catalytic role in this reaction. This chain is tRNA N6-adenosine threonylcarbamoyltransferase, found in Helicobacter acinonychis (strain Sheeba).